Here is a 262-residue protein sequence, read N- to C-terminus: Phosphonates import ATP-binding protein PhnC (262 aa).

The 249-residue stretch at 5–253 folds into the ABC transporter domain; it reads IRVEKLAKTF…RFDHLYRSIN (249 aa). Position 37-44 (37-44) interacts with ATP; the sequence is GPSGSGKS.

This sequence belongs to the ABC transporter superfamily. Phosphonates importer (TC 3.A.1.9.1) family. In terms of assembly, the complex is composed of two ATP-binding proteins (PhnC), two transmembrane proteins (PhnE) and a solute-binding protein (PhnD).

It is found in the cell inner membrane. It catalyses the reaction phosphonate(out) + ATP + H2O = phosphonate(in) + ADP + phosphate + H(+). Functionally, part of the ABC transporter complex PhnCDE involved in phosphonates import. Responsible for energy coupling to the transport system. The chain is Phosphonates import ATP-binding protein PhnC from Escherichia coli O6:K15:H31 (strain 536 / UPEC).